The following is a 286-amino-acid chain: Acetyl-coenzyme A carboxylase carboxyl transferase subunit beta (286 aa).

The region spanning 23-286 is the CoA carboxyltransferase N-terminal domain; that stretch reads IWVKCNNCNQ…ITNKPEPKKE (264 aa). Residues Cys27, Cys30, Cys46, and Cys49 each coordinate Zn(2+). The C4-type zinc-finger motif lies at 27-49; it reads CNNCNQMIYKIELEKNLEVCPKC.

Belongs to the AccD/PCCB family. Acetyl-CoA carboxylase is a heterohexamer composed of biotin carboxyl carrier protein (AccB), biotin carboxylase (AccC) and two subunits each of ACCase subunit alpha (AccA) and ACCase subunit beta (AccD). Zn(2+) serves as cofactor.

It is found in the cytoplasm. The enzyme catalyses N(6)-carboxybiotinyl-L-lysyl-[protein] + acetyl-CoA = N(6)-biotinyl-L-lysyl-[protein] + malonyl-CoA. Its pathway is lipid metabolism; malonyl-CoA biosynthesis; malonyl-CoA from acetyl-CoA: step 1/1. In terms of biological role, component of the acetyl coenzyme A carboxylase (ACC) complex. Biotin carboxylase (BC) catalyzes the carboxylation of biotin on its carrier protein (BCCP) and then the CO(2) group is transferred by the transcarboxylase to acetyl-CoA to form malonyl-CoA. The polypeptide is Acetyl-coenzyme A carboxylase carboxyl transferase subunit beta (Wigglesworthia glossinidia brevipalpis).